The chain runs to 564 residues: 4-coumarate--CoA ligase 1 (564 aa).

ATP-binding residues include serine 209, serine 210, glycine 211, threonine 212, threonine 213, and lysine 217. 2 residues coordinate (E)-4-coumaroyl-AMP: tyrosine 259 and threonine 263. Arginine 280 is a CoA binding site. Positions 282–351 (DLAAMMDLVE…AKLPGAVLGQ (70 aa)) are SBD1. Alanine 329, glutamine 351, glycine 352, threonine 356, and methionine 364 together coordinate (E)-4-coumaroyl-AMP. Positions 351, 352, and 356 each coordinate ATP. The interval 352-419 (GYGMTEAGPV…IRGQQIMKGY (68 aa)) is SBD2. ATP contacts are provided by aspartate 440 and arginine 455. 2 residues coordinate (E)-4-coumaroyl-AMP: lysine 457 and lysine 461. CoA-binding residues include arginine 463 and glycine 464. Lysine 547 serves as a coordination point for ATP.

It belongs to the ATP-dependent AMP-binding enzyme family. The cofactor is Mg(2+). As to expression, expressed in roots, stems, leaf blades and leaf sheaths.

It carries out the reaction (E)-ferulate + ATP + CoA = (E)-feruloyl-CoA + AMP + diphosphate. The catalysed reaction is (E)-4-coumarate + ATP + CoA = (E)-4-coumaroyl-CoA + AMP + diphosphate. It catalyses the reaction (E)-cinnamate + ATP + CoA = (E)-cinnamoyl-CoA + AMP + diphosphate. The enzyme catalyses (E)-caffeate + ATP + CoA = (E)-caffeoyl-CoA + AMP + diphosphate. It carries out the reaction (E)-ferulate + ATP + H(+) = (E)-feruloyl-AMP + diphosphate. The catalysed reaction is (E)-feruloyl-AMP + CoA = (E)-feruloyl-CoA + AMP + H(+). It catalyses the reaction (E)-4-coumarate + ATP + H(+) = (E)-4-coumaroyl-AMP + diphosphate. The enzyme catalyses (E)-4-coumaroyl-AMP + CoA = (E)-4-coumaroyl-CoA + AMP + H(+). It carries out the reaction (E)-caffeate + ATP + H(+) = (E)-caffeoyl-AMP + diphosphate. The catalysed reaction is (E)-caffeoyl-AMP + CoA = (E)-caffeoyl-CoA + AMP + H(+). It participates in phytoalexin biosynthesis; 3,4',5-trihydroxystilbene biosynthesis; 3,4',5-trihydroxystilbene from trans-4-coumarate: step 1/2. Its function is as follows. Involved in the phenylpropanoid metabolism by mediating the activation of a number of hydroxycinnamates for the biosynthesis of monolignols and other phenolic secondary metabolites. Catalyzes the formation of CoA esters of cinnamate, 4-coumarate, caffeate and ferulate. Is more efficient with substrates in the following order: ferulate &gt; 4-coumarate &gt; cinnamate &gt; caffeate. Cannot convert sinapate to its corresponding CoA ester. Follows a two-step reaction mechanism, wherein the carboxylate substrate first undergoes adenylation by ATP, followed by a thioesterification in the presence of CoA to yield the final CoA thioester. The protein is 4-coumarate--CoA ligase 1 of Oryza sativa subsp. japonica (Rice).